Here is a 495-residue protein sequence, read N- to C-terminus: Aspartyl/glutamyl-tRNA(Asn/Gln) amidotransferase subunit B (495 aa).

Belongs to the GatB/GatE family. GatB subfamily. In terms of assembly, heterotrimer of A, B and C subunits.

It catalyses the reaction L-glutamyl-tRNA(Gln) + L-glutamine + ATP + H2O = L-glutaminyl-tRNA(Gln) + L-glutamate + ADP + phosphate + H(+). The catalysed reaction is L-aspartyl-tRNA(Asn) + L-glutamine + ATP + H2O = L-asparaginyl-tRNA(Asn) + L-glutamate + ADP + phosphate + 2 H(+). Allows the formation of correctly charged Asn-tRNA(Asn) or Gln-tRNA(Gln) through the transamidation of misacylated Asp-tRNA(Asn) or Glu-tRNA(Gln) in organisms which lack either or both of asparaginyl-tRNA or glutaminyl-tRNA synthetases. The reaction takes place in the presence of glutamine and ATP through an activated phospho-Asp-tRNA(Asn) or phospho-Glu-tRNA(Gln). This chain is Aspartyl/glutamyl-tRNA(Asn/Gln) amidotransferase subunit B, found in Crocosphaera subtropica (strain ATCC 51142 / BH68) (Cyanothece sp. (strain ATCC 51142)).